The chain runs to 117 residues: Large ribosomal subunit protein bL19 (117 aa).

The protein belongs to the bacterial ribosomal protein bL19 family.

In terms of biological role, this protein is located at the 30S-50S ribosomal subunit interface and may play a role in the structure and function of the aminoacyl-tRNA binding site. The sequence is that of Large ribosomal subunit protein bL19 from Shewanella pealeana (strain ATCC 700345 / ANG-SQ1).